The sequence spans 294 residues: Ribosomal protein L11 methyltransferase (294 aa).

Residues Thr146, Gly167, Asp189, and Asn231 each coordinate S-adenosyl-L-methionine.

This sequence belongs to the methyltransferase superfamily. PrmA family.

It is found in the cytoplasm. The catalysed reaction is L-lysyl-[protein] + 3 S-adenosyl-L-methionine = N(6),N(6),N(6)-trimethyl-L-lysyl-[protein] + 3 S-adenosyl-L-homocysteine + 3 H(+). Functionally, methylates ribosomal protein L11. This is Ribosomal protein L11 methyltransferase from Aliivibrio fischeri (strain ATCC 700601 / ES114) (Vibrio fischeri).